Reading from the N-terminus, the 525-residue chain is GMP synthase [glutamine-hydrolyzing] (525 aa).

Residues 12-206 (RILIIDFGSQ…THGICGCGGD (195 aa)) enclose the Glutamine amidotransferase type-1 domain. Cys90 acts as the Nucleophile in catalysis. Active-site residues include His180 and Glu182. The GMPS ATP-PPase domain occupies 207–399 (WTMAAFKDQA…LGLPDEMVGR (193 aa)). 234–240 (SGGVDSS) lines the ATP pocket.

In terms of assembly, homodimer.

It carries out the reaction XMP + L-glutamine + ATP + H2O = GMP + L-glutamate + AMP + diphosphate + 2 H(+). Its pathway is purine metabolism; GMP biosynthesis; GMP from XMP (L-Gln route): step 1/1. Its function is as follows. Catalyzes the synthesis of GMP from XMP. The protein is GMP synthase [glutamine-hydrolyzing] of Rhodospirillum rubrum (strain ATCC 11170 / ATH 1.1.1 / DSM 467 / LMG 4362 / NCIMB 8255 / S1).